A 497-amino-acid polypeptide reads, in one-letter code: MSQTARRLGPQDMFFLYSESSTTMMHVGALMPFTPPSGAPPDLLRQLVDESKASEVVEPWSLRLSHPELLYHPTQSWVVDDNFDLDYHVRRSALASPGDERELGIPVSRLHSHALDLRRPPWEVHFIEGLEGGRFAIYIKMHHSLIDGYTGQKMLARSLSTDPHDTTHPLFFNIPTPGRSPADTQDSVGGGLIAGAGNVLDGLGDVVRGLGGLVSGVGSVLGSVAGAGRSTFELTKALVNAQLRSDHEYRNLVGSVQAPHCILNTRISRNRRFATQQYPLDRLKAIGAQYDATINDVALAIIGGGLRRFLDELGELPNKSLIVVLPVNVRPKDDEGGGNAVATILATLGTDVADPVQRLAAVTASTRAAKAQLRSMDKDAILAYSAALMAPYGVQLASTLSGVKPPWPYTFNLCVSNVPGPEDVLYVRGSRMEASYPVSLVAHSQALNVTLQSYAGTLNFGFIGCRDTLPHLQRLAVYTGEALDQLAAADGAAGLGS.

His143 acts as the Proton acceptor in catalysis.

Belongs to the long-chain O-acyltransferase family.

The catalysed reaction is an acyl-CoA + a 1,2-diacyl-sn-glycerol = a triacyl-sn-glycerol + CoA. It functions in the pathway glycerolipid metabolism; triacylglycerol biosynthesis. The chain is Putative diacyglycerol O-acyltransferase MT3584 from Mycobacterium tuberculosis (strain CDC 1551 / Oshkosh).